A 336-amino-acid polypeptide reads, in one-letter code: Dihydroorotate dehydrogenase (quinone) (336 aa).

Residues 62–66 (AGLDK) and Thr86 contribute to the FMN site. A substrate-binding site is contributed by Lys66. 111 to 115 (NRMGF) provides a ligand contact to substrate. Residues Asn139 and Asn172 each contribute to the FMN site. Substrate is bound at residue Asn172. Ser175 serves as the catalytic Nucleophile. Asn177 is a binding site for substrate. Residues Lys217 and Thr245 each coordinate FMN. 246–247 (NT) is a substrate binding site. FMN contacts are provided by residues Gly268, Gly297, and 318 to 319 (YT).

The protein belongs to the dihydroorotate dehydrogenase family. Type 2 subfamily. In terms of assembly, monomer. The cofactor is FMN.

The protein resides in the cell membrane. The catalysed reaction is (S)-dihydroorotate + a quinone = orotate + a quinol. It functions in the pathway pyrimidine metabolism; UMP biosynthesis via de novo pathway; orotate from (S)-dihydroorotate (quinone route): step 1/1. Catalyzes the conversion of dihydroorotate to orotate with quinone as electron acceptor. The protein is Dihydroorotate dehydrogenase (quinone) of Pseudoalteromonas translucida (strain TAC 125).